A 517-amino-acid polypeptide reads, in one-letter code: Nucleoside transporter FUN26 (517 aa).

The disordered stretch occupies residues 1-63 (MSTSADTDTI…EREQSVSTEP (63 aa)). Residues 25–44 (THSEEISRSGEEHESENNEH) show a composition bias toward basic and acidic residues. Phosphoserine is present on residues serine 45 and serine 58. Transmembrane regions (helical) follow at residues 76–96 (LSYI…NCIL), 116–136 (IFTS…NIYL), 151–171 (LVWE…HFLL), 174–194 (WFNF…TAMT), 214–234 (MVGQ…LAFI), 243–263 (GGIL…VVMF), 344–364 (LVLS…FASA), 367–387 (VTGL…LWNL), 411–431 (TFIY…FTAI), 446–466 (IVDL…GHVI), and 492–512 (IFVS…VFII).

Belongs to the SLC29A/ENT transporter (TC 2.A.57) family.

The protein resides in the membrane. In terms of biological role, has broad nucleoside selectivity (uridine, adenosine and cytidine) and most likely functions to transport nucleosides across intracellular membranes. This chain is Nucleoside transporter FUN26 (FUN26), found in Saccharomyces cerevisiae (strain ATCC 204508 / S288c) (Baker's yeast).